The sequence spans 256 residues: Calsenilin (256 aa).

The tract at residues 1–20 (MQPAKEVTKASDGSLLGDLG) is disordered. Ser14 carries the post-translational modification Phosphoserine. Lys26 participates in a covalent cross-link: Glycyl lysine isopeptide (Lys-Gly) (interchain with G-Cter in SUMO1). S-palmitoyl cysteine attachment occurs at residues Cys45 and Cys46. The residue at position 60 (Ser60) is a Phosphoserine. The residue at position 63 (Ser63) is a Phosphoserine; by CK1. Residues 67–123 (LELSTVRHQPEGLDQLQAQTKFTKKELQSLYRGFKNECPTGLVDEDTFKLIYAQFFP) form the EF-hand 1; degenerate domain. A Glycyl lysine isopeptide (Lys-Gly) (interchain with G-Cter in SUMO1) cross-link involves residue Lys90. EF-hand domains are found at residues 126–161 (DATTYAHFLFNAFDADGNGAIHFEDFVVGLSILLRG), 162–197 (TVHEKLKWAFNLYDINKDGYITKEEMLAIMKSIYDM), and 210–245 (APAEHVERFFEKMDRNQDGVVTIEEFLEACQKDENI). Ca(2+) contacts are provided by Asp175, Asn177, Asp179, Tyr181, Glu186, Asp223, Asn225, Asp227, and Glu234. The interval 243-256 (ENIMSSMQLFENVI) is interaction with KCND2.

It belongs to the recoverin family. Binds to DNA as a homomultimer. Dimerization is induced by binding to calcium. Interacts with the C-terminus of PSEN1 and PSEN2 and with PSEN2 CTF subunit. Associates with KCN1. Component of heteromultimeric potassium channels. Identified in potassium channel complexes containing KCND1, KCND2, KCND3, KCNIP1, KCNIP2, KCNIP3, KCNIP4, DPP6 and DPP10. Interacts with KCND2 and KCND3. Post-translationally, palmitoylated. Palmitoylation enhances association with the plasma membrane. In terms of processing, proteolytically cleaved by caspase-3. Phosphorylation at Ser-63 inhibits cleavage by CASP3. In terms of tissue distribution, highly expressed in brain. Widely expressed at lower levels. Expression levels are elevated in brain cortex regions affected by Alzheimer disease.

The protein resides in the cytoplasm. It localises to the cell membrane. The protein localises to the endoplasmic reticulum. It is found in the golgi apparatus. Its subcellular location is the nucleus. Calcium-dependent transcriptional repressor that binds to the DRE element of genes including PDYN and FOS. Affinity for DNA is reduced upon binding to calcium and enhanced by binding to magnesium. Seems to be involved in nociception. Its function is as follows. Regulatory subunit of Kv4/D (Shal)-type voltage-gated rapidly inactivating A-type potassium channels, such as KCND2/Kv4.2 and KCND3/Kv4.3. Modulates channel expression at the cell membrane, gating characteristics, inactivation kinetics and rate of recovery from inactivation in a calcium-dependent and isoform-specific manner. Functionally, may play a role in the regulation of PSEN2 proteolytic processing and apoptosis. Together with PSEN2 involved in modulation of amyloid-beta formation. This Homo sapiens (Human) protein is Calsenilin (KCNIP3).